A 509-amino-acid polypeptide reads, in one-letter code: MLLLKQISPPFHLHQLRRRISTIISAGFTLNLPKLEPSSDAELISQMLITNHNPFHFMESSLQLNGISLTPNLIHQTLLRLRHNSKIALSFFQYLRSLPSPSTTPTSFNLIIDILGRVRQFDVVRQLIVEMDQTSPETFLILVKRLIAAGLTRQAVRAFDDAPCFLENRRFRLVEFGFLLDTLCKYGYTKMAVGVFNERKEEFGSDEKVYTILIAGWCKLRRIDMAEKFLVEMIESGIEPNVVTYNVLLNGICRTASLHPEERFERNVRNAEKVFDEMRQRGIEPDVTSFSIVLHMYSRAHKAELTLDKMKLMKAKGISPTIETYTSVVKCLCSCGRLEEAEELLETMVESGISPSSATYNCFFKEYKGRKDANGAMNLYRKMKNGLCKPSTQTYNVLLGTFINLGKMETVKEIWDDLKASETGPDLDSYTSLVHGLCSKEKWKEACGYFVEMIERGFLPQKLTFETLYKGLIQSNKMRTWRRLKKKLDEESITFGSEFQRYPFEPYKR.

Residues 1-19 (MLLLKQISPPFHLHQLRRR) constitute a mitochondrion transit peptide. PPR repeat units follow at residues 172–202 (RLVE…RKEE), 206–240 (DEKV…GIEP), 241–285 (NVVT…GIEP), 286–320 (DVTS…GISP), 321–355 (TIET…GISP), 356–390 (SSAT…LCKP), 391–425 (STQT…ETGP), and 426–460 (DLDS…GFLP).

It belongs to the PPR family. P subfamily.

Its subcellular location is the mitochondrion. This Arabidopsis thaliana (Mouse-ear cress) protein is Pentatricopeptide repeat-containing protein At2g13420, mitochondrial.